Reading from the N-terminus, the 348-residue chain is NADH-ubiquinone oxidoreductase chain 2 (348 aa).

The next 10 helical transmembrane spans lie at 3–23, 25–45, 59–79, 95–115, 149–171, 178–198, 199–219, 242–262, 274–294, and 324–344; these read PTVL…TFIG, HWLL…PLMI, YFIT…TNAW, ATLA…HFWL, LNSN…GGLN, ILAY…HYSP, SLTL…FLLF, VIAL…GFMP, SLII…FFYL, and LILL…PLIL.

The protein belongs to the complex I subunit 2 family.

Its subcellular location is the mitochondrion inner membrane. The catalysed reaction is a ubiquinone + NADH + 5 H(+)(in) = a ubiquinol + NAD(+) + 4 H(+)(out). Its function is as follows. Core subunit of the mitochondrial membrane respiratory chain NADH dehydrogenase (Complex I) that is believed to belong to the minimal assembly required for catalysis. Complex I functions in the transfer of electrons from NADH to the respiratory chain. The immediate electron acceptor for the enzyme is believed to be ubiquinone. The chain is NADH-ubiquinone oxidoreductase chain 2 (MT-ND2) from Scyliorhinus canicula (Small-spotted catshark).